Consider the following 133-residue polypeptide: Ribonuclease P protein component (133 aa).

The protein belongs to the RnpA family. As to quaternary structure, consists of a catalytic RNA component (M1 or rnpB) and a protein subunit.

The catalysed reaction is Endonucleolytic cleavage of RNA, removing 5'-extranucleotides from tRNA precursor.. Functionally, RNaseP catalyzes the removal of the 5'-leader sequence from pre-tRNA to produce the mature 5'-terminus. It can also cleave other RNA substrates such as 4.5S RNA. The protein component plays an auxiliary but essential role in vivo by binding to the 5'-leader sequence and broadening the substrate specificity of the ribozyme. This chain is Ribonuclease P protein component, found in Corynebacterium glutamicum (strain R).